A 93-amino-acid chain; its full sequence is Cobalt transport protein CbiN (93 aa).

The next 2 membrane-spanning stretches (helical) occupy residues 5–25 and 63–83; these read LMLLAMVVALVILPFFINHGG and LLFTLQGSLGAAVIFYILGYC.

It belongs to the CbiN family. In terms of assembly, forms an energy-coupling factor (ECF) transporter complex composed of an ATP-binding protein (A component, CbiO), a transmembrane protein (T component, CbiQ) and 2 possible substrate-capture proteins (S components, CbiM and CbiN) of unknown stoichimetry.

It is found in the cell inner membrane. It functions in the pathway cofactor biosynthesis; adenosylcobalamin biosynthesis. Part of the energy-coupling factor (ECF) transporter complex CbiMNOQ involved in cobalt import. This chain is Cobalt transport protein CbiN, found in Salmonella arizonae (strain ATCC BAA-731 / CDC346-86 / RSK2980).